The following is a 197-amino-acid chain: Outer-membrane lipoprotein LolB (197 aa).

Positions 1-20 (MNRSRRLALFCLGAPLLLQA) are cleaved as a signal peptide. A lipid anchor (N-palmitoyl cysteine) is attached at C21. A lipid anchor (S-diacylglycerol cysteine) is attached at C21.

Belongs to the LolB family. In terms of assembly, monomer.

The protein localises to the cell outer membrane. Functionally, plays a critical role in the incorporation of lipoproteins in the outer membrane after they are released by the LolA protein. The chain is Outer-membrane lipoprotein LolB from Cupriavidus necator (strain ATCC 17699 / DSM 428 / KCTC 22496 / NCIMB 10442 / H16 / Stanier 337) (Ralstonia eutropha).